Here is a 349-residue protein sequence, read N- to C-terminus: Leukotriene B4 receptor 1 (349 aa).

The Extracellular segment spans residues M1 to L19. Residue N2 is glycosylated (N-linked (GlcNAc...) asparagine). A helical transmembrane segment spans residues L20–S42. Topologically, residues I43 to A54 are cytoplasmic. The chain crosses the membrane as a helical span at residues L55–L75. Residues Y76–R91 are Extracellular-facing. A helical membrane pass occupies residues L92–L113. The Cytoplasmic portion of the chain corresponds to D114–L138. The helical transmembrane segment at A139–H159 threads the bilayer. Over L160 to R179 the chain is Extracellular. Residue N164 is glycosylated (N-linked (GlcNAc...) asparagine). The chain crosses the membrane as a helical span at residues A180 to A200. Residues S201–R222 are Cytoplasmic-facing. A helical membrane pass occupies residues L223–L243. At A244–H269 the chain is on the extracellular side. The helical transmembrane segment at V270 to G290 threads the bilayer. The Cytoplasmic portion of the chain corresponds to G291 to E349. The interval S311–E349 is disordered.

This sequence belongs to the G-protein coupled receptor 1 family. In terms of processing, phosphorylated by GRK6 upon leukotriene B4 binding; which promotes desensitization.

It is found in the cell membrane. In terms of biological role, receptor for extracellular ATP &gt; UTP and ADP. The activity of this receptor is mediated by G proteins which activate a phosphatidylinositol-calcium second messenger system. May be the cardiac P2Y receptor involved in the regulation of cardiac muscle contraction through modulation of L-type calcium currents. Is a receptor for leukotriene B4, a potent chemoattractant involved in inflammation and immune response. In Bos taurus (Bovine), this protein is Leukotriene B4 receptor 1 (LTB4R).